A 141-amino-acid chain; its full sequence is Large ribosomal subunit protein uL22 (141 aa).

A disordered region spans residues Glu-110–Ser-141. The span at Lys-117 to Lys-134 shows a compositional bias: low complexity.

The protein belongs to the universal ribosomal protein uL22 family. Part of the 50S ribosomal subunit.

In terms of biological role, this protein binds specifically to 23S rRNA; its binding is stimulated by other ribosomal proteins, e.g. L4, L17, and L20. It is important during the early stages of 50S assembly. It makes multiple contacts with different domains of the 23S rRNA in the assembled 50S subunit and ribosome. Functionally, the globular domain of the protein is located near the polypeptide exit tunnel on the outside of the subunit, while an extended beta-hairpin is found that lines the wall of the exit tunnel in the center of the 70S ribosome. The polypeptide is Large ribosomal subunit protein uL22 (Campylobacter jejuni subsp. doylei (strain ATCC BAA-1458 / RM4099 / 269.97)).